A 1742-amino-acid chain; its full sequence is Complement C4 (1742 aa).

The signal sequence occupies residues 1–19 (MRLLWGLLWAFGLFASSLQ). Asparagine 60 carries an N-linked (GlcNAc...) asparagine glycan. Cysteines 68 and 97 form a disulfide. Asparagine 226 carries N-linked (GlcNAc...) asparagine glycosylation. A disulfide bridge links cysteine 634 with cysteine 668. Residues 675–678 (RKKR) constitute a propeptide that is removed on maturation. Cystine bridges form between cysteine 701–cysteine 727, cysteine 702–cysteine 734, and cysteine 715–cysteine 735. An Anaphylatoxin-like domain is found at 701 to 735 (CCQDGLTRLPMVRSCEQRAARVLQPACREPFLSCC). Asparagine 861 is a glycosylation site (N-linked (GlcNAc...) asparagine). A cross-link (isoglutamyl cysteine thioester (Cys-Gln)) is located at residues 1007 to 1010 (CGEQ). Asparagine 1325 and asparagine 1388 each carry an N-linked (GlcNAc...) asparagine glycan. Tyrosine 1414, tyrosine 1418, and tyrosine 1420 each carry sulfotyrosine. A propeptide spanning residues 1445 to 1451 (RRNRRRR) is cleaved from the precursor. 5 disulfides stabilise this stretch: cysteine 1469–cysteine 1533, cysteine 1581–cysteine 1586, cysteine 1593–cysteine 1671, cysteine 1616–cysteine 1740, and cysteine 1716–cysteine 1725. The 148-residue stretch at 1593–1740 (CPRQRRALER…FIQEYSTLGC (148 aa)) folds into the NTR domain.

In absence of complement activation, circulates in blood as a disulfide-linked trimer of an alpha, beta and gamma chain. In terms of assembly, complement C4b is composed of complement C4b-A, complement C4 beta and complement C4 gamma chains that are associated via disulfide bonds. Non-enzymatic component of the C3 convertase, also named C4bC2b, composed of the serine protease complement C2b (C2), as well as complement C4b. Non-enzymatic component of the C5 convertase, also named C4bC2bC3b, composed of the serine protease complement C2b (C2), complement C3b, as well as complement C4b. Prior to secretion, the single-chain precursor is enzymatically cleaved by plasminogen (PLG) to yield non-identical chains alpha, beta and gamma. During activation of the complement systems, the alpha chain is cleaved into C4a and C4b by different proteases depending on the complement pathway: C4b stays linked to the beta and gamma chains, while C4a is released in the plasma. The alpha chain is cleaved by C1S to generate C4a and C4b following activation by the classical complement system. The alpha chain is cleaved to generate C4a and C4b by MASP2 following activation by the lectin complement system. The alpha chain is cleaved by GZMK to generate C4a and C4b following activation by the GZMK complement system. Further degradation of C4b by C1 into the inactive fragments C4c and C4d blocks the generation of C3 convertase. The proteolytic cleavages often are incomplete so that many structural forms can be found in plasma. In terms of processing, upon activation, the internal thioester bond reacts with carbohydrate antigens on the target surface to form amide or ester bonds, leading to covalent association with the surface of pathogens. Post-translationally, complement C4b interacts with complement C3b via a thioester linkage. N- and O-glycosylated. O-glycosylated with a core 1 or possibly core 8 glycan.

The protein localises to the secreted. It is found in the cell surface. Precursor of non-enzymatic components of the classical, lectin and GZMK complement pathways, which consist in a cascade of proteins that leads to phagocytosis and breakdown of pathogens and signaling that strengthens the adaptive immune system. In terms of biological role, non-enzymatic component of C3 and C5 convertases. Generated following cleavage by complement proteases (C1S, MASP2 or GZMK, depending on the complement pathway), it covalently attaches to the surface of pathogens, where it acts as an opsonin that marks the surface of antigens for removal. It then recruits the serine protease complement C2b to form the C3 and C5 convertases, which cleave and activate C3 and C5, respectively, the next components of the complement pathways. Complement C4b-A isotype is responsible for effective binding to form amide bonds with immune aggregates or protein antigens, while complement C4b-B isotype catalyzes the transacylation of the thioester carbonyl group to form ester bonds with carbohydrate antigens. Its function is as follows. Putative humoral mediator released following cleavage by complement proteases (C1S, MASP2 or GZMK, depending on the complement pathway). While it is strongly similar to anaphylatoxins, its role is unclear. Was reported to act as a mediator of local inflammatory process; however these effects were probably due to contamination with C3a and/C5a anaphylatoxins in biological assays. The protein is Complement C4 of Cavia porcellus (Guinea pig).